Here is a 260-residue protein sequence, read N- to C-terminus: Hydroxyacylglutathione hydrolase (260 aa).

7 residues coordinate Zn(2+): His55, His57, Asp59, His60, His116, Asp133, and His171.

The protein belongs to the metallo-beta-lactamase superfamily. Glyoxalase II family. Monomer. Requires Zn(2+) as cofactor.

The catalysed reaction is an S-(2-hydroxyacyl)glutathione + H2O = a 2-hydroxy carboxylate + glutathione + H(+). The protein operates within secondary metabolite metabolism; methylglyoxal degradation; (R)-lactate from methylglyoxal: step 2/2. Thiolesterase that catalyzes the hydrolysis of S-D-lactoyl-glutathione to form glutathione and D-lactic acid. This Shewanella loihica (strain ATCC BAA-1088 / PV-4) protein is Hydroxyacylglutathione hydrolase.